The following is a 111-amino-acid chain: Resistin-like alpha (111 aa).

Positions 1–23 are cleaved as a signal peptide; the sequence is MKTTTCSLLICISLLQLMVPVNT. 5 disulfides stabilise this stretch: C55–C108, C67–C107, C76–C93, C78–C95, and C82–C97.

The protein belongs to the resistin/FIZZ family. As to quaternary structure, monomer. Highest levels in adipose tissue.

It is found in the secreted. Functionally, probable hormone. Plays a role in pulmonary vascular remodeling. This chain is Resistin-like alpha (Retnla), found in Mus musculus (Mouse).